The following is a 61-amino-acid chain: Large ribosomal subunit protein uL30 (61 aa).

Belongs to the universal ribosomal protein uL30 family. As to quaternary structure, part of the 50S ribosomal subunit.

The protein is Large ribosomal subunit protein uL30 of Jannaschia sp. (strain CCS1).